Here is a 72-residue protein sequence, read N- to C-terminus: SRY-related protein MG42 (72 aa).

The HMG box DNA-binding region spans 1-69 (VKRPMNAFMV…KHMADYPNYK (69 aa)).

The protein localises to the nucleus. The protein is SRY-related protein MG42 of Tarentola mauritanica (Common wall gecko).